A 341-amino-acid chain; its full sequence is Tetraacyldisaccharide 4'-kinase (341 aa).

54-61 lines the ATP pocket; the sequence is TVGGAGKT.

It belongs to the LpxK family.

The catalysed reaction is a lipid A disaccharide + ATP = a lipid IVA + ADP + H(+). Its pathway is glycolipid biosynthesis; lipid IV(A) biosynthesis; lipid IV(A) from (3R)-3-hydroxytetradecanoyl-[acyl-carrier-protein] and UDP-N-acetyl-alpha-D-glucosamine: step 6/6. In terms of biological role, transfers the gamma-phosphate of ATP to the 4'-position of a tetraacyldisaccharide 1-phosphate intermediate (termed DS-1-P) to form tetraacyldisaccharide 1,4'-bis-phosphate (lipid IVA). The protein is Tetraacyldisaccharide 4'-kinase of Brucella melitensis biotype 2 (strain ATCC 23457).